Reading from the N-terminus, the 138-residue chain is Small ribosomal subunit protein uS11c (138 aa).

The tract at residues M1 to A22 is disordered. The span at S9–A22 shows a compositional bias: basic residues.

It belongs to the universal ribosomal protein uS11 family. As to quaternary structure, part of the 30S ribosomal subunit.

The protein resides in the plastid. Its subcellular location is the chloroplast. This is Small ribosomal subunit protein uS11c from Solanum bulbocastanum (Wild potato).